Consider the following 694-residue polypeptide: MSGGEVVCSGWLRKSPPEKKLKRYAWKRRWFVLRSGRLTGDPDVLEYYKNDHAKKPIRIIDLNLCQQVDAGLTFNKKEFENSYIFDINTIDRIFYLVADSEEEMNKWVRCICDICGFNPTEEDPVKAPGSSLQAPADIPLAISTAPPSSQVGASAAAAPPPYQLISLPPHLETLGIQEDPQDYLLLINCQSKKPEPTRTHADSAKSTSSETDCNDNVPSHKNPASSQSKHGVNGFFQQHMMYDSPPSRAASLSVDSSLYNLPRSYSHDVLPKVSPSSTEADGELYVFNTPSGTSSVEPQMRHVSISYDIPPTPGNTYQIPRTFPEGTLGQTSKLDTIPDIPPPRPPKPHPAHDRSPVDTCSITRTASDTDSSYCIPTAGLPPSRSNTISTVDLNKLRKDASSQDCYDTPRTFPSDRSSSLEGFHNHFKIKNILTAGSVSSEELDENYVPMNPNSPPRQHSSSFTEPIQEANYVPMTPGTFDFSSFGMQVPPPAHMGFRSSPKTPPRRPVPVADCEPPPVDRNLKPDRKVKPAPLEIKPLPEWEELQAPVRSPITRSFARDSSRFPLSPRPDSVHSTTSSSDSHDSEENYVPMNPNLSSEDSNLFGSNSLDGGNSPMIKPKGDKQVEYLDLDLDSGKSTPPRKQKSSGSGSSVADERVDYVVVDQQKTLALKSTREAWTDGRQSTESETPAKNVK.

S2 is subject to N-acetylserine. Residues 5–116 (EVVCSGWLRK…WVRCICDICG (112 aa)) form the PH domain. Over residues 194–203 (PEPTRTHADS) the composition is skewed to basic and acidic residues. Residues 194 to 231 (PEPTRTHADSAKSTSSETDCNDNVPSHKNPASSQSKHG) are disordered. Residues 204-230 (AKSTSSETDCNDNVPSHKNPASSQSKH) show a composition bias toward polar residues. 4 positions are modified to phosphoserine: S251, S253, S266, and S304. The interval 309-378 (IPPTPGNTYQ…TDSSYCIPTA (70 aa)) is disordered. Polar residues predominate over residues 358–374 (DTCSITRTASDTDSSYC). T387 is modified (phosphothreonine). S402 and S454 each carry phosphoserine. Disordered stretches follow at residues 492-532 (PAHM…VKPA) and 560-656 (DSSR…ADER). A compositionally biased stretch (polar residues) spans 594-611 (PNLSSEDSNLFGSNSLDG). A Phosphotyrosine modification is found at Y627. At T638 the chain carries Phosphothreonine. S651 carries the post-translational modification Phosphoserine. Residue Y659 is modified to Phosphotyrosine. The segment at 668 to 694 (LALKSTREAWTDGRQSTESETPAKNVK) is disordered. Positions 672-684 (STREAWTDGRQST) are enriched in basic and acidic residues. A Phosphoserine modification is found at S683. A compositionally biased stretch (polar residues) spans 685 to 694 (ESETPAKNVK).

It belongs to the GAB family. Identified in a complex containing FRS2, GRB2, GAB1, PIK3R1 and SOS1. Forms a tripartite complex containing GAB1, METTL13 and SPRY2. Within the complex interacts with METTL13. Interacts with GRB2 and with other SH2-containing proteins. Interacts with phosphorylated LAT2. Interacts with PTPRJ. Interacts (phosphorylated) with PTPN11. Interacts with HCK. In terms of processing, phosphorylated in response to FGFR1 activation. Phosphorylated on tyrosine residue(s) by the epidermal growth factor receptor (EGFR) and the insulin receptor (INSR). Tyrosine phosphorylation of GAB1 mediates interaction with several proteins that contain SH2 domains. Phosphorylated on tyrosine residues by HCK upon IL6 signaling.

Adapter protein that plays a role in intracellular signaling cascades triggered by activated receptor-type kinases. Plays a role in FGFR1 signaling. Probably involved in signaling by the epidermal growth factor receptor (EGFR) and the insulin receptor (INSR). Involved in the MET/HGF-signaling pathway. The protein is GRB2-associated-binding protein 1 (GAB1) of Bos taurus (Bovine).